The chain runs to 147 residues: UPF0179 protein NP_3406A (147 aa).

This sequence belongs to the UPF0179 family.

This chain is UPF0179 protein NP_3406A, found in Natronomonas pharaonis (strain ATCC 35678 / DSM 2160 / CIP 103997 / JCM 8858 / NBRC 14720 / NCIMB 2260 / Gabara) (Halobacterium pharaonis).